Here is a 362-residue protein sequence, read N- to C-terminus: Glutamate 5-kinase (362 aa).

Residue Lys-3 coordinates ATP. Ser-43, Asp-128, and Asn-140 together coordinate substrate. ATP-binding positions include Thr-160–Asp-161 and Thr-202–Lys-208. The region spanning Ala-267–Ser-348 is the PUA domain.

It belongs to the glutamate 5-kinase family.

The protein localises to the cytoplasm. It catalyses the reaction L-glutamate + ATP = L-glutamyl 5-phosphate + ADP. It participates in amino-acid biosynthesis; L-proline biosynthesis; L-glutamate 5-semialdehyde from L-glutamate: step 1/2. Its function is as follows. Catalyzes the transfer of a phosphate group to glutamate to form L-glutamate 5-phosphate. This Xanthomonas oryzae pv. oryzae (strain MAFF 311018) protein is Glutamate 5-kinase.